The sequence spans 213 residues: Thymidylate kinase (213 aa).

10-17 is an ATP binding site; it reads GLEGAGKT.

It belongs to the thymidylate kinase family.

It catalyses the reaction dTMP + ATP = dTDP + ADP. Functionally, phosphorylation of dTMP to form dTDP in both de novo and salvage pathways of dTTP synthesis. In Escherichia fergusonii (strain ATCC 35469 / DSM 13698 / CCUG 18766 / IAM 14443 / JCM 21226 / LMG 7866 / NBRC 102419 / NCTC 12128 / CDC 0568-73), this protein is Thymidylate kinase.